A 217-amino-acid chain; its full sequence is ATP phosphoribosyltransferase (217 aa).

It belongs to the ATP phosphoribosyltransferase family. Short subfamily. Heteromultimer composed of HisG and HisZ subunits.

It is found in the cytoplasm. The catalysed reaction is 1-(5-phospho-beta-D-ribosyl)-ATP + diphosphate = 5-phospho-alpha-D-ribose 1-diphosphate + ATP. The protein operates within amino-acid biosynthesis; L-histidine biosynthesis; L-histidine from 5-phospho-alpha-D-ribose 1-diphosphate: step 1/9. Functionally, catalyzes the condensation of ATP and 5-phosphoribose 1-diphosphate to form N'-(5'-phosphoribosyl)-ATP (PR-ATP). Has a crucial role in the pathway because the rate of histidine biosynthesis seems to be controlled primarily by regulation of HisG enzymatic activity. The sequence is that of ATP phosphoribosyltransferase from Polaromonas naphthalenivorans (strain CJ2).